The primary structure comprises 94 residues: DNA-directed RNA polymerase subunit omega (94 aa).

The protein belongs to the RNA polymerase subunit omega family. The RNAP catalytic core consists of 2 alpha, 1 beta, 1 beta' and 1 omega subunit. When a sigma factor is associated with the core the holoenzyme is formed, which can initiate transcription.

It catalyses the reaction RNA(n) + a ribonucleoside 5'-triphosphate = RNA(n+1) + diphosphate. Its function is as follows. Promotes RNA polymerase assembly. Latches the N- and C-terminal regions of the beta' subunit thereby facilitating its interaction with the beta and alpha subunits. The sequence is that of DNA-directed RNA polymerase subunit omega from Tolumonas auensis (strain DSM 9187 / NBRC 110442 / TA 4).